The chain runs to 365 residues: MVPFLRILGIETSCDETAAAVVERDAEGHSNVLSDVVLSQLDEHSAYGGVVPEIAARAHVEALDELIEEALKRANVSLNDVDAIAATSGPGLIGGLLVGLMTGKAIARAAGKPLYAINHLEGHALTARLTDGLSFPYLMLLVSGGHTQLILVRGVGQYERWGTTIDDALGEAFDKTAKLLGLPYPGGPAVERMARDGNPDRFDFPRPLVGEARLDFSFSGLKTAVRQAAQDIAPLSDQDVADICASFQKAVSRTLKDRIGRGLQRFKTEFPATGEKPALVVAGGVAANLELRGTLQALCNKNGFRFIAPPLHLCTDNAVMIAWAGLERMATGAAPDTLDVQPRSRWPLDSNAETLIGFGKRGAKA.

2 residues coordinate Fe cation: His-119 and His-123. Substrate-binding positions include 141–145, Asp-174, Gly-187, and Asn-288; that span reads LVSGG. Asp-316 contributes to the Fe cation binding site.

This sequence belongs to the KAE1 / TsaD family. Requires Fe(2+) as cofactor.

It localises to the cytoplasm. The catalysed reaction is L-threonylcarbamoyladenylate + adenosine(37) in tRNA = N(6)-L-threonylcarbamoyladenosine(37) in tRNA + AMP + H(+). Functionally, required for the formation of a threonylcarbamoyl group on adenosine at position 37 (t(6)A37) in tRNAs that read codons beginning with adenine. Is involved in the transfer of the threonylcarbamoyl moiety of threonylcarbamoyl-AMP (TC-AMP) to the N6 group of A37, together with TsaE and TsaB. TsaD likely plays a direct catalytic role in this reaction. The chain is tRNA N6-adenosine threonylcarbamoyltransferase from Rhizobium johnstonii (strain DSM 114642 / LMG 32736 / 3841) (Rhizobium leguminosarum bv. viciae).